The following is a 127-amino-acid chain: Large ribosomal subunit protein uL24B (127 aa).

The protein belongs to the universal ribosomal protein uL24 family. As to quaternary structure, component of the large ribosomal subunit (LSU). Mature yeast ribosomes consist of a small (40S) and a large (60S) subunit. The 40S small subunit contains 1 molecule of ribosomal RNA (18S rRNA) and 33 different proteins (encoded by 57 genes). The large 60S subunit contains 3 rRNA molecules (25S, 5.8S and 5S rRNA) and 46 different proteins (encoded by 81 genes).

The protein localises to the cytoplasm. Its function is as follows. Component of the ribosome, a large ribonucleoprotein complex responsible for the synthesis of proteins in the cell. The small ribosomal subunit (SSU) binds messenger RNAs (mRNAs) and translates the encoded message by selecting cognate aminoacyl-transfer RNA (tRNA) molecules. The large subunit (LSU) contains the ribosomal catalytic site termed the peptidyl transferase center (PTC), which catalyzes the formation of peptide bonds, thereby polymerizing the amino acids delivered by tRNAs into a polypeptide chain. The nascent polypeptides leave the ribosome through a tunnel in the LSU and interact with protein factors that function in enzymatic processing, targeting, and the membrane insertion of nascent chains at the exit of the ribosomal tunnel. This is Large ribosomal subunit protein uL24B from Saccharomyces cerevisiae (strain ATCC 204508 / S288c) (Baker's yeast).